The primary structure comprises 777 residues: Probable aconitate hydratase, mitochondrial (777 aa).

A mitochondrion-targeting transit peptide spans 1 to 26 (MNSLLRLSHLAGPAHYRALHSSSSIW). Substrate contacts are provided by residues Q96 and 189-191 (DSH). [4Fe-4S] cluster is bound by residues C382, C445, and C448. Residues R471 and R476 each coordinate substrate. The tract at residues 534-555 (YDPGEDTFQAPSGSGQVDVSPS) is disordered. Residues 542–555 (QAPSGSGQVDVSPS) are compositionally biased toward polar residues. Residues R601 and 664–665 (SR) each bind substrate.

It belongs to the aconitase/IPM isomerase family. Monomer. [4Fe-4S] cluster is required as a cofactor.

The protein localises to the mitochondrion. It catalyses the reaction citrate = D-threo-isocitrate. It functions in the pathway carbohydrate metabolism; tricarboxylic acid cycle; isocitrate from oxaloacetate: step 2/2. Functionally, catalyzes the isomerization of citrate to isocitrate via cis-aconitate. The sequence is that of Probable aconitate hydratase, mitochondrial from Caenorhabditis elegans.